We begin with the raw amino-acid sequence, 343 residues long: MLDLSLPSGLRDLLPDHSAHLAELSAKLQEVFSQFGYRRLFLPTLERLDVVERGLSAAALADVMKFVEPGSGEVVAIRPDITPQIARLYAARPDALPSPARLCYDGPVLRAREARAGRPREVYQAGVELLGAGGASADAEALVVLARALERVGLGSAVVEVGHARFAHAVIDAAGLAPKARGAAWDALSRKDEGALAALARRARGSAGARAALPELATLYGDGALARARALARQVPGAAAALGEVEAALRLARRRGVEAVSVDLGETRGLGYYTGVTFAGYAPGAGSAVAAGGRYDELLARFGRPGPAIGFAVDLEFATQALERANGRAKRPARPRRSPPRPR.

Positions 324–343 (RANGRAKRPARPRRSPPRPR) are disordered. Over residues 327-343 (GRAKRPARPRRSPPRPR) the composition is skewed to basic residues.

This sequence belongs to the class-II aminoacyl-tRNA synthetase family. HisZ subfamily. In terms of assembly, heteromultimer composed of HisG and HisZ subunits.

The protein resides in the cytoplasm. It participates in amino-acid biosynthesis; L-histidine biosynthesis; L-histidine from 5-phospho-alpha-D-ribose 1-diphosphate: step 1/9. Functionally, required for the first step of histidine biosynthesis. May allow the feedback regulation of ATP phosphoribosyltransferase activity by histidine. This Anaeromyxobacter sp. (strain Fw109-5) protein is ATP phosphoribosyltransferase regulatory subunit.